The sequence spans 405 residues: Argininosuccinate synthase (405 aa).

Residues 10–18 and Ala-38 each bind ATP; that span reads AYSGGVDTS. An L-citrulline-binding site is contributed by Tyr-89. Gly-119 provides a ligand contact to ATP. Thr-121, Asn-125, and Asp-126 together coordinate L-aspartate. Asn-125 is an L-citrulline binding site. L-citrulline contacts are provided by Arg-129, Ser-177, Ser-186, Glu-262, and Tyr-274.

It belongs to the argininosuccinate synthase family. Type 1 subfamily. Homotetramer.

The protein resides in the cytoplasm. The enzyme catalyses L-citrulline + L-aspartate + ATP = 2-(N(omega)-L-arginino)succinate + AMP + diphosphate + H(+). It functions in the pathway amino-acid biosynthesis; L-arginine biosynthesis; L-arginine from L-ornithine and carbamoyl phosphate: step 2/3. The sequence is that of Argininosuccinate synthase from Synechococcus sp. (strain RCC307).